The chain runs to 177 residues: Archaemetzincin (177 aa).

Zn(2+) is bound at residue histidine 129. The active-site Proton acceptor is the glutamate 130. Zn(2+)-binding residues include histidine 133, histidine 139, cysteine 140, cysteine 145, cysteine 164, and cysteine 167.

The protein belongs to the peptidase M54 family. In terms of assembly, monomer. It depends on Zn(2+) as a cofactor.

In terms of biological role, probable zinc metalloprotease whose natural substrate is unknown. The sequence is that of Archaemetzincin from Sulfolobus acidocaldarius (strain ATCC 33909 / DSM 639 / JCM 8929 / NBRC 15157 / NCIMB 11770).